Reading from the N-terminus, the 208-residue chain is ATP-dependent Clp protease proteolytic subunit (208 aa).

S111 (nucleophile) is an active-site residue. H136 is an active-site residue.

This sequence belongs to the peptidase S14 family. In terms of assembly, fourteen ClpP subunits assemble into 2 heptameric rings which stack back to back to give a disk-like structure with a central cavity, resembling the structure of eukaryotic proteasomes.

It localises to the cytoplasm. The enzyme catalyses Hydrolysis of proteins to small peptides in the presence of ATP and magnesium. alpha-casein is the usual test substrate. In the absence of ATP, only oligopeptides shorter than five residues are hydrolyzed (such as succinyl-Leu-Tyr-|-NHMec, and Leu-Tyr-Leu-|-Tyr-Trp, in which cleavage of the -Tyr-|-Leu- and -Tyr-|-Trp bonds also occurs).. In terms of biological role, cleaves peptides in various proteins in a process that requires ATP hydrolysis. Has a chymotrypsin-like activity. Plays a major role in the degradation of misfolded proteins. The polypeptide is ATP-dependent Clp protease proteolytic subunit (Vibrio campbellii (strain ATCC BAA-1116)).